Consider the following 286-residue polypeptide: Alpha-ketoglutarate-dependent dioxygenase alkB homolog 3 (286 aa).

Residues 1–38 are disordered; the sequence is MEDKRRRARVQGAWAGPAKSQATAQPAPTAENNLQQRP. The span at 20–36 shows a compositional bias: polar residues; it reads SQATAQPAPTAENNLQQ. Substrate-binding positions include W115 and 141–143; that span reads YTY. The 107-residue stretch at 172–278 folds into the Fe2OG dioxygenase domain; that stretch reads SFNSLLCNLY…RINLTFRTVY (107 aa). L177 is subject to (4R)-5-hydroxyleucine; alternate. L177 carries the post-translational modification (4R)-5-oxoleucine; alternate. 179-181 serves as a coordination point for 2-oxoglutarate; it reads NLY. Residues H191 and D193 each contribute to the Fe cation site. A substrate-binding site is contributed by D194. Position 257 (H257) interacts with Fe cation. 2-oxoglutarate-binding positions include 269–275 and R275; that span reads RINLTFR.

The protein belongs to the alkB family. As to quaternary structure, interacts with the ASCC complex composed of ASCC1, ASCC2 and ASCC3. Interacts directly with ASCC3, and is thereby recruited to the ASCC complex. Interacts with OTUD4; the interaction is direct. Interacts with USP7 and USP9X. The cofactor is Fe(2+). Post-translationally, ubiquitinated; undergoes 'Lys-48'-linked polyubiquitination. OTUD4 promotes USP7 and USP9X-dependent deubiquitination of 'Lys-48'-polyubiquitinated ALKBH3 promoting the repair of alkylated DNA lesions.

The protein localises to the nucleus. Its subcellular location is the cytoplasm. The enzyme catalyses an N(1)-methyladenosine in mRNA + 2-oxoglutarate + O2 = an adenosine in mRNA + formaldehyde + succinate + CO2. It catalyses the reaction a methylated nucleobase within DNA + 2-oxoglutarate + O2 = a nucleobase within DNA + formaldehyde + succinate + CO2. It carries out the reaction an N(1)-methyl-2'-deoxyadenosine in single-stranded DNA + 2-oxoglutarate + O2 = a 2'-deoxyadenosine in single-stranded DNA + formaldehyde + succinate + CO2 + H(+). The catalysed reaction is an N(3)-methyl-2'-deoxycytidine in single-stranded DNA + 2-oxoglutarate + O2 = a 2'-deoxycytidine in single-stranded DNA + formaldehyde + succinate + CO2 + H(+). The enzyme catalyses a 3,N(4)-etheno-2'-deoxycytidine in single-stranded DNA + 2-oxoglutarate + O2 + H2O = a 2'-deoxycytidine in single-stranded DNA + glyoxal + succinate + CO2. Its activity is regulated as follows. Activated by ascorbate. Functionally, dioxygenase that mediates demethylation of DNA and RNA containing 1-methyladenosine (m1A). Repairs alkylated DNA containing 1-methyladenosine (m1A) and 3-methylcytosine (m3C) by oxidative demethylation. Has a strong preference for single-stranded DNA. Able to process alkylated m3C within double-stranded regions via its interaction with ASCC3, which promotes DNA unwinding to generate single-stranded substrate needed for ALKBH3. Can repair exocyclic 3,N4-ethenocytosine adducs in single-stranded DNA. Also acts on RNA. Demethylates N(1)-methyladenosine (m1A) RNA, an epigenetic internal modification of messenger RNAs (mRNAs) highly enriched within 5'-untranslated regions (UTRs) and in the vicinity of start codons. Requires molecular oxygen, alpha-ketoglutarate and iron. The protein is Alpha-ketoglutarate-dependent dioxygenase alkB homolog 3 of Bos taurus (Bovine).